The primary structure comprises 156 residues: 6,7-dimethyl-8-ribityllumazine synthase (156 aa).

Residues phenylalanine 22, 57-59 (AYE), and 81-83 (TVI) each bind 5-amino-6-(D-ribitylamino)uracil. (2S)-2-hydroxy-3-oxobutyl phosphate is bound at residue 86–87 (GT). Histidine 89 (proton donor) is an active-site residue. Residue phenylalanine 114 participates in 5-amino-6-(D-ribitylamino)uracil binding. Arginine 128 serves as a coordination point for (2S)-2-hydroxy-3-oxobutyl phosphate.

It belongs to the DMRL synthase family. As to quaternary structure, forms an icosahedral capsid composed of 60 subunits, arranged as a dodecamer of pentamers.

The catalysed reaction is (2S)-2-hydroxy-3-oxobutyl phosphate + 5-amino-6-(D-ribitylamino)uracil = 6,7-dimethyl-8-(1-D-ribityl)lumazine + phosphate + 2 H2O + H(+). Its pathway is cofactor biosynthesis; riboflavin biosynthesis; riboflavin from 2-hydroxy-3-oxobutyl phosphate and 5-amino-6-(D-ribitylamino)uracil: step 1/2. In terms of biological role, catalyzes the formation of 6,7-dimethyl-8-ribityllumazine by condensation of 5-amino-6-(D-ribitylamino)uracil with 3,4-dihydroxy-2-butanone 4-phosphate. This is the penultimate step in the biosynthesis of riboflavin. The polypeptide is 6,7-dimethyl-8-ribityllumazine synthase (Escherichia coli O45:K1 (strain S88 / ExPEC)).